The primary structure comprises 238 residues: Serine protease SplE (238 aa).

The N-terminal stretch at 1–36 is a signal peptide; the sequence is MNKNIIIKSIAALTILTSVTGVGTTVVEGIQQTAKA. Active-site charge relay system residues include His75, Asp113, and Ser191.

It belongs to the peptidase S1B family.

The protein resides in the secreted. In Staphylococcus aureus (strain USA300), this protein is Serine protease SplE (splE).